The primary structure comprises 402 residues: Protein prenyltransferase alpha subunit repeat-containing protein 1 (402 aa).

At Ala2 the chain carries N-acetylalanine. 4 PFTA repeats span residues Leu87–Ile120, Asp122–Ser155, Glu180–Val213, and Glu219–Val252. A disordered region spans residues Leu263–Glu282. One copy of the PFTA 5 repeat lies at Glu295 to Ala328.

The protein belongs to the protein prenyltransferase subunit alpha family.

In Homo sapiens (Human), this protein is Protein prenyltransferase alpha subunit repeat-containing protein 1 (PTAR1).